The sequence spans 379 residues: Queuine tRNA-ribosyltransferase (379 aa).

The active-site Proton acceptor is the Asp-94. Residues 94–98 (DSGGF), Asp-148, Gln-191, and Gly-218 each bind substrate. The interval 249–255 (GVGSPDS) is RNA binding. Asp-268 serves as the catalytic Nucleophile. An RNA binding; important for wobble base 34 recognition region spans residues 273–277 (TRIAR). The Zn(2+) site is built by Cys-306, Cys-308, Cys-311, and His-337.

It belongs to the queuine tRNA-ribosyltransferase family. In terms of assembly, homodimer. Within each dimer, one monomer is responsible for RNA recognition and catalysis, while the other monomer binds to the replacement base PreQ1. The cofactor is Zn(2+).

The catalysed reaction is 7-aminomethyl-7-carbaguanine + guanosine(34) in tRNA = 7-aminomethyl-7-carbaguanosine(34) in tRNA + guanine. It functions in the pathway tRNA modification; tRNA-queuosine biosynthesis. Its function is as follows. Catalyzes the base-exchange of a guanine (G) residue with the queuine precursor 7-aminomethyl-7-deazaguanine (PreQ1) at position 34 (anticodon wobble position) in tRNAs with GU(N) anticodons (tRNA-Asp, -Asn, -His and -Tyr). Catalysis occurs through a double-displacement mechanism. The nucleophile active site attacks the C1' of nucleotide 34 to detach the guanine base from the RNA, forming a covalent enzyme-RNA intermediate. The proton acceptor active site deprotonates the incoming PreQ1, allowing a nucleophilic attack on the C1' of the ribose to form the product. After dissociation, two additional enzymatic reactions on the tRNA convert PreQ1 to queuine (Q), resulting in the hypermodified nucleoside queuosine (7-(((4,5-cis-dihydroxy-2-cyclopenten-1-yl)amino)methyl)-7-deazaguanosine). This chain is Queuine tRNA-ribosyltransferase, found in Bacillus cereus (strain Q1).